Reading from the N-terminus, the 1025-residue chain is Rho GTPase-activating protein Graf (1025 aa).

The region spanning 271–388 is the PH domain; that stretch reads IFTKRGYLFL…WISAMDGTEP (118 aa). Residues 402 to 589 enclose the Rho-GAP domain; sequence YHLDEAGFMF…ILIDNYERIF (188 aa). The segment at 824–866 is disordered; sequence GSASGPQQHPPVQRGLHSYGQTKHYSPLMPTSTSSSNDSVCDS. Low complexity predominate over residues 854–866; the sequence is TSTSSSNDSVCDS. Residues 963-1023 enclose the SH3 domain; sequence TGTARVRTLY…PENYVEHLKP (61 aa).

Interacts with Egfr (when ubiquitinated). In terms of tissue distribution, in the adult brain, expressed in the antennal lobe, the subesophageal ganglion and the alpha/beta neurons of the mushroom body.

It is found in the cytoplasm. The protein localises to the cytosol. Its subcellular location is the cytoplasmic vesicle. GTPase-activating protein for Rho family proteins. Essential component of the CLIC (clathrin-independent carrier)/GEEC (GPI-anchored protein-enriched early endocytic compartment) endocytic pathway. During hematopoiesis, inhibits Egfr-ras-MAPK signaling by promoting Spi-induced Egfr internalization through CLIC/GEEC endocytosis, thereby preventing plasmatocyte overproliferation. Essential for normal mushroom body (MB) development and consequently the formation of olfactory long-term memories. During MD development, required to stop the MB beta-lobe from crossing the brain midline, possibly acting via its role in the CLIC/GEEC endocytic pathway to down-regulate the Egfr-ras-MAPK signaling at the tip of the beta-lobes. Required during embryo cellularization for maintaining and regulating the rate of actomyosin ring constriction. During cellularization, inhibits Rho-GTP levels at the furrow canal tip in a spatiotemporal manner, thus delaying the onset of actomyosin contraction and ensuring appropriate closure of the cells at the base of nuclei after membrane extension. The protein is Rho GTPase-activating protein Graf of Drosophila melanogaster (Fruit fly).